The chain runs to 65 residues: Myosin-11 (65 aa).

Positions 1-65 (RSGKLDAFLV…NWQWWRLFTK (65 aa)) constitute a Myosin motor domain.

This sequence belongs to the TRAFAC class myosin-kinesin ATPase superfamily. Myosin family. In terms of assembly, muscle myosin is a hexameric protein that consists of 2 heavy chain subunits (MHC), 2 alkali light chain subunits (MLC) and 2 regulatory light chain subunits (MLC-2).

Its subcellular location is the melanosome. The protein localises to the cytoplasm. The protein resides in the myofibril. Muscle contraction. This Sus scrofa (Pig) protein is Myosin-11 (MYH11).